The chain runs to 208 residues: Small ribosomal subunit protein uS4 (208 aa).

Positions 98–161 (RRLDNVVYRM…KSNPQVVRAM (64 aa)) constitute an S4 RNA-binding domain.

This sequence belongs to the universal ribosomal protein uS4 family. As to quaternary structure, part of the 30S ribosomal subunit. Contacts protein S5. The interaction surface between S4 and S5 is involved in control of translational fidelity.

Its function is as follows. One of the primary rRNA binding proteins, it binds directly to 16S rRNA where it nucleates assembly of the body of the 30S subunit. In terms of biological role, with S5 and S12 plays an important role in translational accuracy. The chain is Small ribosomal subunit protein uS4 from Helicobacter acinonychis (strain Sheeba).